The following is a 650-amino-acid chain: Growth hormone receptor (650 aa).

A signal peptide spans 1–24; that stretch reads MDLCQVFLTLALAVTSSTFSGSEA. The Extracellular portion of the chain corresponds to 25–273; sequence TPATLGKASP…ILEACEEDIQ (249 aa). 2 disulfide bridges follow: Cys-56/Cys-66 and Cys-109/Cys-120. N-linked (GlcNAc...) asparagine glycosylation occurs at Asn-123. A disulfide bridge links Cys-134 with Cys-148. Residues 159–262 enclose the Fibronectin type-III domain; sequence PPIGLNWTLL…EVLRVIFPQT (104 aa). Asn-164, Asn-169, and Asn-208 each carry an N-linked (GlcNAc...) asparagine glycan. A WSXWS motif motif is present at residues 248 to 252; sequence YSEFS. A helical transmembrane segment spans residues 274 to 297; sequence FPWFLIIIFGIFGVAVMLFVVIFS. Residues 298-650 are Cytoplasmic-facing; sequence KQQRIKMLIL…STDQLNKIMQ (353 aa). The tract at residues 303-390 is required for JAK2 binding; the sequence is KMLILPPVPV…HEKSAGILGA (88 aa). Positions 306–314 match the Box 1 motif motif; sequence ILPPVPVPK. A UbE motif motif is present at residues 349-358; the sequence is DSWVEFIELD. Ser-350 bears the Phosphoserine mark. The tract at residues 466-486 is disordered; that stretch reads KPQPLLSSETEATHQLASTPM. The span at 470–486 shows a compositional bias: polar residues; the sequence is LLSSETEATHQLASTPM. Phosphotyrosine is present on residues Tyr-498 and Tyr-606.

It belongs to the type I cytokine receptor family. Type 1 subfamily. As to quaternary structure, on growth hormone (GH) binding, forms homodimers and binds JAK2 via a box 1-containing domain. In terms of processing, the soluble form (GHBP) is produced by phorbol ester-promoted proteolytic cleavage at the cell surface (shedding) by ADAM17/TACE. Shedding is inhibited by growth hormone (GH) binding to the receptor probably due to a conformational change in GHR rendering the receptor inaccessible to ADAM17. Post-translationally, on GH binding, phosphorylated on tyrosine residues in the cytoplasmic domain by JAK2. Ubiquitinated by the ECS(SOCS2) complex following ligand-binding and phosphorylation by JAK2, leading to its degradation by the proteasome. Regulation by the ECS(SOCS2) complex acts as a negative feedback loop of growth hormone receptor signaling. Ubiquitination is not sufficient for GHR internalization. Expressed in all tissues tested including, liver, heart, adipose tissue, mammary gland, testes, ovary, brain, kidney and muscle. Highest levels in liver.

It localises to the cell membrane. Its subcellular location is the secreted. Its function is as follows. Receptor for pituitary gland growth hormone (GH1) involved in regulating postnatal body growth. On ligand binding, couples to the JAK2/STAT5 pathway. The soluble form (GHBP) acts as a reservoir of growth hormone in plasma and may be a modulator/inhibitor of GH signaling. In Mus musculus (Mouse), this protein is Growth hormone receptor (Ghr).